A 285-amino-acid chain; its full sequence is Shikimate dehydrogenase (NADP(+)) (285 aa).

Residues 20 to 22 (SLS) and Thr67 each bind shikimate. Lys71 functions as the Proton acceptor in the catalytic mechanism. Glu83 lines the NADP(+) pocket. Residues Asn92 and Asp107 each contribute to the shikimate site. NADP(+) contacts are provided by residues 132 to 136 (GAGGA) and Leu230. Tyr232 serves as a coordination point for shikimate. An NADP(+)-binding site is contributed by Gly253.

This sequence belongs to the shikimate dehydrogenase family. In terms of assembly, homodimer.

It carries out the reaction shikimate + NADP(+) = 3-dehydroshikimate + NADPH + H(+). Its pathway is metabolic intermediate biosynthesis; chorismate biosynthesis; chorismate from D-erythrose 4-phosphate and phosphoenolpyruvate: step 4/7. Its function is as follows. Involved in the biosynthesis of the chorismate, which leads to the biosynthesis of aromatic amino acids. Catalyzes the reversible NADPH linked reduction of 3-dehydroshikimate (DHSA) to yield shikimate (SA). This chain is Shikimate dehydrogenase (NADP(+)), found in Salinibacter ruber (strain DSM 13855 / M31).